A 235-amino-acid polypeptide reads, in one-letter code: MAYARALLKLSGEALMGNQGYGIDPEIVQAIARDVAEVVATGTQLAIVVGGGNIFRGLKGSAAGMDRATADYVGMLATVMNAITLQDGLERAGIPTRVQTAIEMQEVAEPYIRRRAMRHLEKGRVVVFGAGCGNPFFTTDTTAALRAAEISADVVFKATKVDGVYDKDPHQFPDAVRYDSLTFQQVLSGELAVMDSTAIALCKDNNIPIVVFNLFEPGNIGKAVAGEPIGSRISN.

9-12 (KLSG) serves as a coordination point for ATP. Residues 17–22 (GNQGYG) form an involved in allosteric activation by GTP region. G51 lines the UMP pocket. The ATP site is built by G52 and R56. UMP-binding positions include D71 and 132–139 (CGNPFFTT). ATP-binding residues include T159, Y165, and D168.

The protein belongs to the UMP kinase family. Homohexamer.

The protein localises to the cytoplasm. The enzyme catalyses UMP + ATP = UDP + ADP. It functions in the pathway pyrimidine metabolism; CTP biosynthesis via de novo pathway; UDP from UMP (UMPK route): step 1/1. With respect to regulation, allosterically activated by GTP. Inhibited by UTP. Functionally, catalyzes the reversible phosphorylation of UMP to UDP. This is Uridylate kinase from Synechococcus sp. (strain CC9311).